A 243-amino-acid polypeptide reads, in one-letter code: Ubiquinone/menaquinone biosynthesis C-methyltransferase UbiE (243 aa).

Residues Thr69, Asp90, and Asp116 to Ala117 each bind S-adenosyl-L-methionine.

The protein belongs to the class I-like SAM-binding methyltransferase superfamily. MenG/UbiE family.

It catalyses the reaction a 2-demethylmenaquinol + S-adenosyl-L-methionine = a menaquinol + S-adenosyl-L-homocysteine + H(+). The catalysed reaction is a 2-methoxy-6-(all-trans-polyprenyl)benzene-1,4-diol + S-adenosyl-L-methionine = a 5-methoxy-2-methyl-3-(all-trans-polyprenyl)benzene-1,4-diol + S-adenosyl-L-homocysteine + H(+). It participates in quinol/quinone metabolism; menaquinone biosynthesis; menaquinol from 1,4-dihydroxy-2-naphthoate: step 2/2. It functions in the pathway cofactor biosynthesis; ubiquinone biosynthesis. Methyltransferase required for the conversion of demethylmenaquinol (DMKH2) to menaquinol (MKH2) and the conversion of 2-polyprenyl-6-methoxy-1,4-benzoquinol (DDMQH2) to 2-polyprenyl-3-methyl-6-methoxy-1,4-benzoquinol (DMQH2). The polypeptide is Ubiquinone/menaquinone biosynthesis C-methyltransferase UbiE (Ralstonia nicotianae (strain ATCC BAA-1114 / GMI1000) (Ralstonia solanacearum)).